The chain runs to 331 residues: DNA-directed RNA polymerase subunit alpha (331 aa).

Residues Met-1–Trp-230 are alpha N-terminal domain (alpha-NTD). Positions Leu-247–Lys-331 are alpha C-terminal domain (alpha-CTD).

It belongs to the RNA polymerase alpha chain family. As to quaternary structure, homodimer. The RNAP catalytic core consists of 2 alpha, 1 beta/beta' and 1 omega subunit. When a sigma factor is associated with the core the holoenzyme is formed, which can initiate transcription.

The catalysed reaction is RNA(n) + a ribonucleoside 5'-triphosphate = RNA(n+1) + diphosphate. In terms of biological role, DNA-dependent RNA polymerase catalyzes the transcription of DNA into RNA using the four ribonucleoside triphosphates as substrates. The polypeptide is DNA-directed RNA polymerase subunit alpha (Wolinella succinogenes (strain ATCC 29543 / DSM 1740 / CCUG 13145 / JCM 31913 / LMG 7466 / NCTC 11488 / FDC 602W) (Vibrio succinogenes)).